Here is an 879-residue protein sequence, read N- to C-terminus: DNA double-strand break repair Rad50 ATPase (879 aa).

Residues asparagine 32–serine 38 and glutamine 139 contribute to the ATP site. Coiled-coil stretches lie at residues isoleucine 184–lysine 304 and glutamate 342–lysine 436. Positions leucine 394 to asparagine 492 constitute a Zinc-hook domain. Cysteine 440 and cysteine 443 together coordinate Zn(2+). Residues isoleucine 502–lysine 722 adopt a coiled-coil conformation. An ATP-binding site is contributed by leucine 786–glutamate 791.

This sequence belongs to the SMC family. RAD50 subfamily. Homodimer. Forms a heterotetramer composed of two Mre11 subunits and two Rad50 subunits. Zn(2+) serves as cofactor.

Part of the Rad50/Mre11 complex, which is involved in the early steps of DNA double-strand break (DSB) repair. The complex may facilitate opening of the processed DNA ends to aid in the recruitment of HerA and NurA. Rad50 controls the balance between DNA end bridging and DNA resection via ATP-dependent structural rearrangements of the Rad50/Mre11 complex. The polypeptide is DNA double-strand break repair Rad50 ATPase (Sulfurisphaera tokodaii (strain DSM 16993 / JCM 10545 / NBRC 100140 / 7) (Sulfolobus tokodaii)).